The primary structure comprises 353 residues: L-tryptophan dehydrogenase (353 aa).

Arginine 44 lines the NAD(+) pocket. The active-site Proton donor/acceptor is lysine 80. NAD(+)-binding positions include aspartate 114, threonine 146, 176–181 (GLGNVG), lysine 204, and 255–257 (AAN).

This sequence belongs to the Glu/Leu/Phe/Val dehydrogenases family. As to quaternary structure, homodimer.

It carries out the reaction L-tryptophan + NAD(+) + H2O = indole-3-pyruvate + NH4(+) + NADH + H(+). Its activity is regulated as follows. Highly susceptible to inhibition by indole-3-pyruvate. Activity is not affected by the presence of metal ions, EDTA, KCl or DMSO. Functionally, catalyzes the reversible oxidative deamination of L-tryptophan to indole-3-pyruvate in the presence of NAD(+). Shows weak activity with L-phenylalanine, but cannot use other L-amino acids and D-Trp. Cannot use NADP(+) for oxidative deamination of L-Trp, and shows only weak activity with NADPH for reductive amination of indole-3-pyruvate. Involved in the biosynthesis of scytonemin, a cyanobacterial radiation-absorbing pigment. The protein is L-tryptophan dehydrogenase of Nostoc punctiforme.